The primary structure comprises 214 residues: Urease accessory protein UreG 2 (214 aa).

Position 22–29 (22–29 (GPVGSGKT)) interacts with GTP.

Belongs to the SIMIBI class G3E GTPase family. UreG subfamily. As to quaternary structure, homodimer. UreD, UreF and UreG form a complex that acts as a GTP-hydrolysis-dependent molecular chaperone, activating the urease apoprotein by helping to assemble the nickel containing metallocenter of UreC. The UreE protein probably delivers the nickel.

The protein localises to the cytoplasm. Its function is as follows. Facilitates the functional incorporation of the urease nickel metallocenter. This process requires GTP hydrolysis, probably effectuated by UreG. The protein is Urease accessory protein UreG 2 of Bradyrhizobium sp. (strain BTAi1 / ATCC BAA-1182).